An 89-amino-acid chain; its full sequence is DNA/RNA-binding protein Alba 2 (89 aa).

Belongs to the histone-like Alba family. In terms of assembly, forms homodimers and homotetramers. Interacts with Alba 1.

Its subcellular location is the cytoplasm. The protein localises to the chromosome. Its function is as follows. Binds double-stranded DNA tightly but without sequence specificity. Involved in DNA compaction. In Archaeoglobus fulgidus (strain ATCC 49558 / DSM 4304 / JCM 9628 / NBRC 100126 / VC-16), this protein is DNA/RNA-binding protein Alba 2.